Reading from the N-terminus, the 585-residue chain is Organic cation transporter 1 (585 aa).

Residues 1-40 (MSFQAMETFAEISQEILMSATKPPDFDFVLEQVGNYGTYQ) lie on the Cytoplasmic side of the membrane. Residues 41–61 (IVFFFIICLPTSLPSAFSAFN) form a helical membrane-spanning segment. The Extracellular portion of the chain corresponds to 62 to 155 (IPFVVGNPPH…LVCDQQAWIE (94 aa)). N-linked (GlcNAc...) asparagine glycans are attached at residues asparagine 87, asparagine 98, and asparagine 133. Residues 156–176 (ISTTSFYVGSFIGNCLFGYVA) traverse the membrane as a helical segment. Residues 177–184 (DKFGRRRS) lie on the Cytoplasmic side of the membrane. A helical membrane pass occupies residues 185-205 (FFVILTVLIVCGTASSFAKDI). Topologically, residues 206–212 (ESFIILR) are extracellular. Residues 213–233 (FFTGLAFPALFQIPFIICMEF) form a helical membrane-spanning segment. The Cytoplasmic segment spans residues 234–243 (MGNSGRIFSG). A helical membrane pass occupies residues 244 to 264 (LMTSLFFGAAMALLGVVAMFI). Over 265–269 (RRWRQ) the chain is Extracellular. The chain crosses the membrane as a helical span at residues 270–290 (LTFFCNAPFAFYIIYYFFLPE). The Cytoplasmic portion of the chain corresponds to 291 to 360 (SPRWSVSVGK…FKTPNLRRKT (70 aa)). The helical transmembrane segment at 361 to 381 (LIVTYIWVMNAIIYNGLTLNV) threads the bilayer. At 382–389 (SNLPVDDY) the chain is on the extracellular side. Residues 390-410 (WSFIINGAVELPGYFVVWPLL) traverse the membrane as a helical segment. At 411–416 (QCAGRR) the chain is on the cytoplasmic side. The helical transmembrane segment at 417 to 437 (WTLAATMIVCGIGCVSAMFMP) threads the bilayer. Residues 438–446 (DGYPWLVAS) lie on the Extracellular side of the membrane. The helical transmembrane segment at 447 to 467 (ASFIGKFGVGSGFAVIYIFAG) threads the bilayer. At 468–476 (ELYPTVVRA) the chain is on the cytoplasmic side. Residues 477 to 497 (IGMGMSSMVAGSGLLLAPHIV) form a helical membrane-spanning segment. The Extracellular portion of the chain corresponds to 498–504 (NLGKIVK). The chain crosses the membrane as a helical span at residues 505–525 (ILPLLIMGLMALSAGILTFFL). Residues 526 to 585 (PETLGAPLPMTIEDAENFGKKPEPDSGMFTQAAKKRESQPLLEPHTPMDRRRRSSRLMNI) lie on the Cytoplasmic side of the membrane. The disordered stretch occupies residues 544-585 (GKKPEPDSGMFTQAAKKRESQPLLEPHTPMDRRRRSSRLMNI). Residues 575-585 (RRRRSSRLMNI) show a composition bias toward basic residues.

The protein belongs to the major facilitator (TC 2.A.1) superfamily. Organic cation transporter (TC 2.A.1.19) family.

The protein localises to the membrane. Its function is as follows. Transports organic cations such as tetraethylammonium (TEA). Displays a broad substrate specificity. This Caenorhabditis elegans protein is Organic cation transporter 1 (oct-1).